Reading from the N-terminus, the 491-residue chain is Equilibrative nucleobase transporter 1 (491 aa).

A helical transmembrane segment spans residues 17–37 (LLECLGFAGVLFGWPSLVFVF). Asn-56 carries an N-linked (GlcNAc...) asparagine glycan. A run of 5 helical transmembrane segments spans residues 72–92 (LIFT…GYIF), 102–122 (LIAI…SAGS), 123–143 (AVLL…FLIT), 156–176 (STII…FLII), and 188–208 (ASFI…FLLM). Residues Asn-220 and Asn-229 are each glycosylated (N-linked (GlcNAc...) asparagine). At Ser-253 the chain carries Phosphoserine. Thr-258 is modified (phosphothreonine). 6 helical membrane passes run 279–299 (FAWH…FIGT), 319–339 (TNAF…GLLM), 356–376 (STLA…SLLC), 396–418 (ILQV…LAFP), 427–447 (GLVM…FTLI), and 456–476 (FYVN…PFLV).

Belongs to the SLC43A transporter (TC 2.A.1.44) family. Widely expressed with highest levels in the liver and lung, followed by the pancreas. Highly expressed in macrophages.

It is found in the basolateral cell membrane. It catalyses the reaction adenine(out) = adenine(in). The enzyme catalyses guanine(out) = guanine(in). It carries out the reaction hypoxanthine(out) = hypoxanthine(in). Its activity is regulated as follows. Adenine transport is strongly inhibited by decynium-22. 6-mercaptopurine-transport is inhibited by 6-thioguanine, 6-methylmercaptopurine and decynium-22. In terms of biological role, sodium-independent purine-selective nucleobase transporter which mediates the equilibrative transport of extracellular purine nucleobases such as adenine, guanine and hypoxanthine. May regulate fatty acid (FA) transport in adipocytes, acting as a positive regulator of FA efflux and as a negative regulator of FA uptake. Sodium-independent purine-selective nucleobase transporter which mediates the equilibrative transport of extracellular purine nucleobase adenine. Mediates the influx and efflux of the purine nucleobase analog drug 6-mercaptopurine across the membrane. This chain is Equilibrative nucleobase transporter 1 (SLC43A3), found in Homo sapiens (Human).